A 69-amino-acid polypeptide reads, in one-letter code: Putative membrane protein insertion efficiency factor (69 aa).

The protein belongs to the UPF0161 family.

It localises to the cell membrane. Functionally, could be involved in insertion of integral membrane proteins into the membrane. The chain is Putative membrane protein insertion efficiency factor from Clostridium perfringens (strain SM101 / Type A).